We begin with the raw amino-acid sequence, 362 residues long: 3-dehydroquinate synthase (362 aa).

It belongs to the archaeal-type DHQ synthase family.

It catalyses the reaction 2-amino-2,3,7-trideoxy-D-lyxo-hept-6-ulosonate + NAD(+) + H2O = 3-dehydroquinate + NH4(+) + NADH + H(+). In terms of biological role, catalyzes the oxidative deamination and cyclization of 2-amino-3,7-dideoxy-D-threo-hept-6-ulosonic acid (ADH) to yield 3-dehydroquinate (DHQ), which is fed into the canonical shikimic pathway of aromatic amino acid biosynthesis. This Methanothrix thermoacetophila (strain DSM 6194 / JCM 14653 / NBRC 101360 / PT) (Methanosaeta thermophila) protein is 3-dehydroquinate synthase.